The sequence spans 255 residues: Indole-3-glycerol phosphate synthase (255 aa).

This sequence belongs to the TrpC family.

The enzyme catalyses 1-(2-carboxyphenylamino)-1-deoxy-D-ribulose 5-phosphate + H(+) = (1S,2R)-1-C-(indol-3-yl)glycerol 3-phosphate + CO2 + H2O. The protein operates within amino-acid biosynthesis; L-tryptophan biosynthesis; L-tryptophan from chorismate: step 4/5. The polypeptide is Indole-3-glycerol phosphate synthase (Streptococcus thermophilus (strain ATCC BAA-491 / LMD-9)).